The primary structure comprises 234 residues: Thymidine kinase, cytosolic (234 aa).

S2 bears the N-acetylserine mark. Phosphoserine occurs at positions 2 and 13. ATP-binding positions include G26 to S33, D58 to R60, and D97 to Q100. The active-site Proton acceptor is the E98. F128 is a substrate binding site. 2 residues coordinate Zn(2+): C153 and C156. Substrate-binding positions include V172–G176 and Y181. Residues C185 and C188 each coordinate Zn(2+). The short motif at K203–N205 is the KEN box element. S231 is subject to Phosphoserine.

This sequence belongs to the thymidine kinase family. Homotetramer. Tetramerization from dimerization is induced by ATP and increases catalytic efficiency due to a high affinity for thymidine. Tetramerization is inhibited by phosphorylation at Ser-13. Interacts (via the KEN box) with FZR1. In terms of processing, phosphorylated on Ser-13 in mitosis. Phosphorylation of Ser-13 by CDK1 during mitosis reduces homotetramerization and catalytic efficiency when DNA replication is complete and intracellular TK1 is still present at a high level. Polyubiquitinated. Postmitosis, ubiquitination leads to proteasomal degradation. The KEN box sequence located at the C-terminal region targets for degradation by the anaphase promoting complex (APC/C) activated and rate-limited by FZR1.

It localises to the cytoplasm. It catalyses the reaction thymidine + ATP = dTMP + ADP + H(+). In terms of biological role, cell-cycle-regulated enzyme of importance in nucleotide metabolism. Catalyzes the first enzymatic step in the salvage pathway converting thymidine into thymidine monophosphate. Transcriptional regulation limits expression to the S phase of the cell cycle and transient expression coincides with the oscillation in the intracellular dTTP concentration. Also important for the activation of anticancer and antiviral nucleoside analog prodrugs such as 1-b-d-arabinofuranosylcytosine (AraC) and 3c-azido-3c-deoxythymidine (AZT). The polypeptide is Thymidine kinase, cytosolic (Homo sapiens (Human)).